Reading from the N-terminus, the 622-residue chain is 1-deoxy-D-xylulose-5-phosphate synthase (622 aa).

Thiamine diphosphate contacts are provided by residues His-80 and 121–123 (GHS). A Mg(2+)-binding site is contributed by Asp-152. Thiamine diphosphate-binding positions include 153–154 (GA), Asn-181, Tyr-288, and Glu-370. Asn-181 lines the Mg(2+) pocket.

This sequence belongs to the transketolase family. DXPS subfamily. In terms of assembly, homodimer. It depends on Mg(2+) as a cofactor. The cofactor is thiamine diphosphate.

It carries out the reaction D-glyceraldehyde 3-phosphate + pyruvate + H(+) = 1-deoxy-D-xylulose 5-phosphate + CO2. The protein operates within metabolic intermediate biosynthesis; 1-deoxy-D-xylulose 5-phosphate biosynthesis; 1-deoxy-D-xylulose 5-phosphate from D-glyceraldehyde 3-phosphate and pyruvate: step 1/1. Catalyzes the acyloin condensation reaction between C atoms 2 and 3 of pyruvate and glyceraldehyde 3-phosphate to yield 1-deoxy-D-xylulose-5-phosphate (DXP). In Shewanella oneidensis (strain ATCC 700550 / JCM 31522 / CIP 106686 / LMG 19005 / NCIMB 14063 / MR-1), this protein is 1-deoxy-D-xylulose-5-phosphate synthase.